The primary structure comprises 222 residues: 2-C-methyl-D-erythritol 4-phosphate cytidylyltransferase (222 aa).

The protein belongs to the IspD/TarI cytidylyltransferase family. IspD subfamily.

It carries out the reaction 2-C-methyl-D-erythritol 4-phosphate + CTP + H(+) = 4-CDP-2-C-methyl-D-erythritol + diphosphate. The protein operates within isoprenoid biosynthesis; isopentenyl diphosphate biosynthesis via DXP pathway; isopentenyl diphosphate from 1-deoxy-D-xylulose 5-phosphate: step 2/6. Catalyzes the formation of 4-diphosphocytidyl-2-C-methyl-D-erythritol from CTP and 2-C-methyl-D-erythritol 4-phosphate (MEP). The protein is 2-C-methyl-D-erythritol 4-phosphate cytidylyltransferase of Porphyromonas gingivalis (strain ATCC 33277 / DSM 20709 / CIP 103683 / JCM 12257 / NCTC 11834 / 2561).